The primary structure comprises 342 residues: Phosphoribosylformylglycinamidine cyclo-ligase (342 aa).

It belongs to the AIR synthase family.

Its subcellular location is the cytoplasm. The catalysed reaction is 2-formamido-N(1)-(5-O-phospho-beta-D-ribosyl)acetamidine + ATP = 5-amino-1-(5-phospho-beta-D-ribosyl)imidazole + ADP + phosphate + H(+). It participates in purine metabolism; IMP biosynthesis via de novo pathway; 5-amino-1-(5-phospho-D-ribosyl)imidazole from N(2)-formyl-N(1)-(5-phospho-D-ribosyl)glycinamide: step 2/2. This chain is Phosphoribosylformylglycinamidine cyclo-ligase, found in Staphylococcus aureus (strain Mu3 / ATCC 700698).